Reading from the N-terminus, the 339-residue chain is Methylthioribose-1-phosphate isomerase (339 aa).

Substrate-binding positions include 49 to 51 (RGA), R86, and Q187. D228 acts as the Proton donor in catalysis. 238 to 239 (NK) contacts substrate.

It belongs to the eIF-2B alpha/beta/delta subunits family. MtnA subfamily.

The enzyme catalyses 5-(methylsulfanyl)-alpha-D-ribose 1-phosphate = 5-(methylsulfanyl)-D-ribulose 1-phosphate. It functions in the pathway amino-acid biosynthesis; L-methionine biosynthesis via salvage pathway; L-methionine from S-methyl-5-thio-alpha-D-ribose 1-phosphate: step 1/6. Its function is as follows. Catalyzes the interconversion of methylthioribose-1-phosphate (MTR-1-P) into methylthioribulose-1-phosphate (MTRu-1-P). The chain is Methylthioribose-1-phosphate isomerase from Cronobacter sakazakii (strain ATCC BAA-894) (Enterobacter sakazakii).